Here is a 633-residue protein sequence, read N- to C-terminus: Extracellular metalloproteinase 5 (633 aa).

A signal peptide spans 1 to 21 (MHGLLLAAAGLLSLPLHVVAH). The propeptide occupies 22 to 245 (PQPSTSLAGR…HNVVDYVSHA (224 aa)). Asn-285 is a glycosylation site (N-linked (GlcNAc...) asparagine). His-428 contributes to the Zn(2+) binding site. Glu-429 is a catalytic residue. Zn(2+) is bound at residue His-432. Residues Asn-592 and Asn-621 are each glycosylated (N-linked (GlcNAc...) asparagine).

The protein belongs to the peptidase M36 family. Zn(2+) serves as cofactor.

The protein resides in the secreted. Functionally, secreted metalloproteinase probably acting as a virulence factor. This Trichophyton rubrum (Athlete's foot fungus) protein is Extracellular metalloproteinase 5 (MEP5).